Reading from the N-terminus, the 347-residue chain is DRICTGITSSNSPHVVKTATQGEVNVTGVIPLTTTPTKSHFANLKGTKTRGKLCPKCLNCTDLDVALGRPKCMGTIPSAKASILYEVKPVTSGCFPIMHDRTKXRQLPNLLRGYENIRLSTHNVINAETAPGGPYKVGTSGSCPNVTNGNGFFATMAWAVPKNDNNKTATNPLTVEVPYICTEGEDQITVWGFHSDNETQMVKLYGDSKPQKFTSSANGVTTHYVSQIGGFPNQAEDGGLPQSGRIVVDYMVQKSGKTGTITYQRGILLPQKVWCASGRSKVIKGSLPLIGEADCLHEKYGGLNKSKPYYTGEHAKAIGNCPIWVKTPLKLANGTKYRPPAKLLKER.

Residues Asn25, Asn59, Asn145, Asn166, Asn304, and Asn333 are each glycosylated (N-linked (GlcNAc...) asparagine; by host).

The protein belongs to the influenza viruses hemagglutinin family. Homotrimer of disulfide-linked HA1-HA2. Post-translationally, in natural infection, inactive HA is matured into HA1 and HA2 outside the cell by one or more trypsin-like, arginine-specific endoprotease secreted by the bronchial epithelial cells. One identified protease that may be involved in this process is secreted in lungs by club cells. In terms of processing, palmitoylated.

It is found in the virion membrane. Its subcellular location is the host apical cell membrane. Functionally, binds to sialic acid-containing receptors on the cell surface, bringing about the attachment of the virus particle to the cell. Plays a major role in the determination of host range restriction and virulence. Class I viral fusion protein. Responsible for penetration of the virus into the cell cytoplasm by mediating the fusion of the membrane of the endocytosed virus particle with the endosomal membrane. Low pH in endosomes induce an irreversible conformational change in HA2, releasing the fusion hydrophobic peptide. Several trimers are required to form a competent fusion pore. The chain is Hemagglutinin (HA) from Homo sapiens (Human).